A 175-amino-acid chain; its full sequence is Sec-independent protein translocase protein TatB (175 aa).

A helical transmembrane segment spans residues 1-21; the sequence is MLDLGLSKMALIGVVALVVLG. Disordered stretches follow at residues 96–115 and 153–175; these read VSPGGSAAADAPDGPSAASG and VQSGAARVARHRPASLRRPARFL. The segment covering 160 to 175 has biased composition (basic residues); the sequence is VARHRPASLRRPARFL.

This sequence belongs to the TatB family. In terms of assembly, the Tat system comprises two distinct complexes: a TatABC complex, containing multiple copies of TatA, TatB and TatC subunits, and a separate TatA complex, containing only TatA subunits. Substrates initially bind to the TatABC complex, which probably triggers association of the separate TatA complex to form the active translocon.

Its subcellular location is the cell inner membrane. Its function is as follows. Part of the twin-arginine translocation (Tat) system that transports large folded proteins containing a characteristic twin-arginine motif in their signal peptide across membranes. Together with TatC, TatB is part of a receptor directly interacting with Tat signal peptides. TatB may form an oligomeric binding site that transiently accommodates folded Tat precursor proteins before their translocation. The polypeptide is Sec-independent protein translocase protein TatB (Burkholderia mallei (strain ATCC 23344)).